A 71-amino-acid chain; its full sequence is Protein PSY3 (71 aa).

The first 25 residues, Met-1–Ala-25, serve as a signal peptide directing secretion. Positions Arg-26–Asn-49 are excised as a propeptide. Positions Ser-47–Arg-71 are disordered. Tyr-51 carries the sulfotyrosine modification. Position 63 is a 4-hydroxyproline (Pro-63). A glycan (O-linked (Ara...) hydroxyproline) is linked at Pro-63. Residues Gly-66–Arg-71 constitute a propeptide that is removed on maturation.

Belongs to the sulfated-peptide plant hormone family. The sulfation and the glycosylation are required for full activity.

It localises to the secreted. Promotes cellular proliferation and expansion. This Arabidopsis thaliana (Mouse-ear cress) protein is Protein PSY3 (PSY3).